The following is a 422-amino-acid chain: uncharacterized protein (422 aa).

Helical transmembrane passes span 23-43 (IVKI…LIYD), 47-67 (AIGT…LAPV), 90-110 (AIVL…WFVM), 112-132 (LMIV…ALIP), 151-171 (AQIV…FISP), 172-192 (SYTM…VLFI), 228-248 (ILYP…PWEA), 263-283 (IVYS…GFVL), 291-308 (YGLL…AFFI), 318-340 (VFFA…YTII), 352-372 (VYAV…VICG), and 381-401 (GKVI…ILLF).

Belongs to the major facilitator superfamily.

The protein resides in the cell membrane. This is an uncharacterized protein from Bacillus subtilis (strain 168).